The chain runs to 854 residues: DNA mismatch repair protein MutS (854 aa).

615 to 622 (GPNMGGKS) serves as a coordination point for ATP.

The protein belongs to the DNA mismatch repair MutS family.

In terms of biological role, this protein is involved in the repair of mismatches in DNA. It is possible that it carries out the mismatch recognition step. This protein has a weak ATPase activity. The sequence is that of DNA mismatch repair protein MutS from Proteus mirabilis (strain HI4320).